Here is a 177-residue protein sequence, read N- to C-terminus: uncharacterized protein (177 aa).

This sequence to Synechocystis PCC 6803 slr1290 and sll0925.

This is an uncharacterized protein from Synechocystis sp. (strain ATCC 27184 / PCC 6803 / Kazusa).